The chain runs to 534 residues: Beta-1,2-xylosyltransferase (534 aa).

The Cytoplasmic portion of the chain corresponds to 1–11 (MSKRNPKILKI). A helical; Signal-anchor for type II membrane protein transmembrane segment spans residues 12 to 34 (FLYMLLLNSLFLIIYFVFHSSSF). At 35–534 (SPEQSQPPHI…LTEIMKSLGC (500 aa)) the chain is on the lumenal side. N-linked (GlcNAc...) asparagine glycosylation is found at asparagine 51, asparagine 301, and asparagine 479.

Post-translationally, glycosylation at least at one of the two sites Asn-51 and Asn-301 is necessary for enzyme stability and activity.

Its subcellular location is the golgi apparatus membrane. The catalysed reaction is N(4)-{beta-D-GlcNAc-(1-&gt;2)-alpha-D-Man-(1-&gt;3)-[beta-D-GlcNAc-(1-&gt;2)-alpha-D-Man-(1-&gt;6)]-beta-D-Man-(1-&gt;4)-beta-D-GlcNAc-(1-&gt;4)-beta-D-GlcNAc}-L-asparaginyl-[protein] + UDP-alpha-D-xylose = N(4)-{beta-D-GlcNAc-(1-&gt;2)-alpha-D-Man-(1-&gt;3)-[beta-D-GlcNAc-(1-&gt;2)-alpha-D-Man-(1-&gt;6)]-[beta-D-Xyl-(1-&gt;2)]-beta-D-Man-(1-&gt;4)-beta-D-GlcNAc-(1-&gt;4)-beta-D-GlcNAc}-L-asparaginyl-[protein] + UDP + H(+). It participates in protein modification; protein glycosylation. Its function is as follows. Glycosyltransferase involved in the xylosylation of N-glycans. Possesses beta-1,2-xylosyltransferase activity, transferring xylose from UDP-xylose to the core beta-linked mannose of N-glycans. Involved in the biosynthesis of glycoprotein bound N-glycans. Does not require metal ions for its activity. This is Beta-1,2-xylosyltransferase from Arabidopsis thaliana (Mouse-ear cress).